A 163-amino-acid polypeptide reads, in one-letter code: ADP-ribosylation factor-like protein 2-binding protein (163 aa).

It belongs to the ARL2BP family. Interacts with GTP bound ARL2 and ARL3; the complex ARL2-ARL2BP as well as ARL2BP alone, binds to SLC25A4/ANT1. Interaction with ARL2 may be required for targeting to cilia basal body. Interacts with STAT3; interaction is enhanced with ARL2. Found in a complex with ARL2BP, ARL2 and SLC25A6. Found in a complex with ARL2, ARL2BP and SLC25A4. Interacts with STAT2, STAT3 and STAT4. As to expression, widely expressed, with most abundant activity in brain, especially in hippocampus and cortex. Also expressed in lung, cerebellum, liver, kidney, retina, spleen, muscle and heart (at protein level).

It localises to the cytoplasm. The protein resides in the mitochondrion intermembrane space. It is found in the cytoskeleton. The protein localises to the microtubule organizing center. Its subcellular location is the centrosome. It localises to the nucleus. The protein resides in the cilium basal body. Functionally, together with ARL2, plays a role in the nuclear translocation, retention and transcriptional activity of STAT3. May play a role as an effector of ARL2. The chain is ADP-ribosylation factor-like protein 2-binding protein (Arl2bp) from Mus musculus (Mouse).